Here is a 260-residue protein sequence, read N- to C-terminus: Proliferating cell nuclear antigen (260 aa).

Residues 61–80 mediate DNA binding; it reads RCDRNLSMGMNLGSMAKILK.

The protein belongs to the PCNA family. As to quaternary structure, homotrimer. Forms a complex with activator 1 heteropentamer in the presence of ATP. Interacts with E2f. Interacts with the catalytic subunits of two DNA polymerase complexes: PolD1 from the delta complex and PolE1/DNApol-epsilon255 from the epsilon complex. In terms of tissue distribution, expressed at high levels in adult ovary.

The protein resides in the nucleus. Its subcellular location is the chromosome. It is found in the cytoplasm. Likely to be an auxiliary protein of DNA polymerase delta complex and is probably involved in the control of DNA replication and repair by increasing the polymerase's processibility. The chain is Proliferating cell nuclear antigen from Drosophila melanogaster (Fruit fly).